Consider the following 340-residue polypeptide: NADH-quinone oxidoreductase subunit H (340 aa).

A run of 9 helical transmembrane segments spans residues 3–23 (LVGM…LVYM), 69–89 (WAFF…WAVI), 102–122 (VVVM…VLAI), 127–147 (VYGI…LGAI), 154–174 (ISYE…AGSL), 186–206 (MPYW…VSML), 248–268 (ILVS…PLNI), 274–294 (IPGF…FIWV), and 312–332 (KVFL…LLWV).

The protein belongs to the complex I subunit 1 family. In terms of assembly, NDH-1 is composed of 14 different subunits. Subunits NuoA, H, J, K, L, M, N constitute the membrane sector of the complex.

The protein localises to the cell inner membrane. It catalyses the reaction a quinone + NADH + 5 H(+)(in) = a quinol + NAD(+) + 4 H(+)(out). NDH-1 shuttles electrons from NADH, via FMN and iron-sulfur (Fe-S) centers, to quinones in the respiratory chain. The immediate electron acceptor for the enzyme in this species is believed to be ubiquinone. Couples the redox reaction to proton translocation (for every two electrons transferred, four hydrogen ions are translocated across the cytoplasmic membrane), and thus conserves the redox energy in a proton gradient. This subunit may bind ubiquinone. This Anaplasma phagocytophilum (strain HZ) protein is NADH-quinone oxidoreductase subunit H.